The primary structure comprises 106 residues: Met repressor (106 aa).

The protein belongs to the MetJ family. In terms of assembly, homodimer.

The protein resides in the cytoplasm. Functionally, this regulatory protein, when combined with SAM (S-adenosylmethionine) represses the expression of the methionine regulon and of enzymes involved in SAM synthesis. The protein is Met repressor of Vibrio campbellii (strain ATCC BAA-1116).